A 900-amino-acid polypeptide reads, in one-letter code: Probable beta-mannosidase (900 aa).

The first 21 residues, 1–21 (MRTSLVVCLFWLLFQLHTTHG), serve as a signal peptide directing secretion. N-linked (GlcNAc...) asparagine glycans are attached at residues Asn38, Asn42, and Asn131. Glu463 serves as the catalytic Proton donor. Asn477, Asn576, Asn661, and Asn738 each carry an N-linked (GlcNAc...) asparagine glycan.

The protein belongs to the glycosyl hydrolase 2 family.

The protein localises to the lysosome. The enzyme catalyses Hydrolysis of terminal, non-reducing beta-D-mannose residues in beta-D-mannosides.. The chain is Probable beta-mannosidase from Caenorhabditis elegans.